The sequence spans 491 residues: Argininosuccinate lyase (491 aa).

It belongs to the lyase 1 family. Argininosuccinate lyase subfamily.

The protein resides in the cytoplasm. The catalysed reaction is 2-(N(omega)-L-arginino)succinate = fumarate + L-arginine. The protein operates within amino-acid biosynthesis; L-arginine biosynthesis; L-arginine from L-ornithine and carbamoyl phosphate: step 3/3. This is Argininosuccinate lyase from Methanosarcina barkeri (strain Fusaro / DSM 804).